The primary structure comprises 129 residues: uncharacterized protein (129 aa).

Residue Lys-121 forms an Isoglutamyl lysine isopeptide (Lys-Gln) (interchain with Q-Cter in protein Pup) linkage.

This is an uncharacterized protein from Mycolicibacterium smegmatis (strain ATCC 700084 / mc(2)155) (Mycobacterium smegmatis).